The following is a 294-amino-acid chain: Nucleotide-binding protein Smal_0950 (294 aa).

16–23 provides a ligand contact to ATP; it reads GLSGSGKS. 69–72 is a binding site for GTP; it reads DVRG.

The protein belongs to the RapZ-like family.

In terms of biological role, displays ATPase and GTPase activities. The protein is Nucleotide-binding protein Smal_0950 of Stenotrophomonas maltophilia (strain R551-3).